A 362-amino-acid polypeptide reads, in one-letter code: Holliday junction branch migration complex subunit RuvB (362 aa).

Residues 1–27 (MANIEKTEFHVPAPVSAAGNQKSSLGN) form a disordered region. The interval 13–206 (APVSAAGNQK…FGFTAQMEFY (194 aa)) is large ATPase domain (RuvB-L). ATP contacts are provided by residues leucine 45, arginine 46, glycine 87, lysine 90, threonine 91, threonine 92, 153–155 (EDF), arginine 196, tyrosine 206, and arginine 243. Threonine 91 provides a ligand contact to Mg(2+). Residues 207–277 (EVEDLTKVVV…AAQAALVVFD (71 aa)) are small ATPAse domain (RuvB-S). The segment at 280–362 (EMGLDRLDRA…EPPEGIIGSL (83 aa)) is head domain (RuvB-H). DNA contacts are provided by arginine 335 and arginine 340.

It belongs to the RuvB family. As to quaternary structure, homohexamer. Forms an RuvA(8)-RuvB(12)-Holliday junction (HJ) complex. HJ DNA is sandwiched between 2 RuvA tetramers; dsDNA enters through RuvA and exits via RuvB. An RuvB hexamer assembles on each DNA strand where it exits the tetramer. Each RuvB hexamer is contacted by two RuvA subunits (via domain III) on 2 adjacent RuvB subunits; this complex drives branch migration. In the full resolvosome a probable DNA-RuvA(4)-RuvB(12)-RuvC(2) complex forms which resolves the HJ.

It localises to the cytoplasm. It carries out the reaction ATP + H2O = ADP + phosphate + H(+). The RuvA-RuvB-RuvC complex processes Holliday junction (HJ) DNA during genetic recombination and DNA repair, while the RuvA-RuvB complex plays an important role in the rescue of blocked DNA replication forks via replication fork reversal (RFR). RuvA specifically binds to HJ cruciform DNA, conferring on it an open structure. The RuvB hexamer acts as an ATP-dependent pump, pulling dsDNA into and through the RuvAB complex. RuvB forms 2 homohexamers on either side of HJ DNA bound by 1 or 2 RuvA tetramers; 4 subunits per hexamer contact DNA at a time. Coordinated motions by a converter formed by DNA-disengaged RuvB subunits stimulates ATP hydrolysis and nucleotide exchange. Immobilization of the converter enables RuvB to convert the ATP-contained energy into a lever motion, pulling 2 nucleotides of DNA out of the RuvA tetramer per ATP hydrolyzed, thus driving DNA branch migration. The RuvB motors rotate together with the DNA substrate, which together with the progressing nucleotide cycle form the mechanistic basis for DNA recombination by continuous HJ branch migration. Branch migration allows RuvC to scan DNA until it finds its consensus sequence, where it cleaves and resolves cruciform DNA. This Corynebacterium diphtheriae (strain ATCC 700971 / NCTC 13129 / Biotype gravis) protein is Holliday junction branch migration complex subunit RuvB.